Consider the following 2339-residue polypeptide: MMKKKNIDIEELKRLIEESSMKKRFVKDIKRNCEIKSIRFGIMSKEDIIKYSEVKIMNREMYKNNSGIPYPYGVLDLKLGAHKSNSVCETCNKKLINCSGHFGYIELNYPVFHIGYYKYIIHILYCICKYCSSLLLSKEKIDFYCNLKKKSTDDSFYKKHLFKRILNNCKKVNKCYICGNPQGVIKKIIKPSLDQFMKLKHILKVKENGKMIIKEEDLNSLYVLKLFKNINPYHVKLLNIENPEKLIITALLVPPNTIRPSVIIDEHGTAEDDLTCILSEITQLNNTIYNQCTNGYQTNQFLGNVEFLQLQITRFINSDSPAVSQLLATQNISKPGRGICQRLKGKEGRFRCNLSGKRVDFSSRTVISPDPNISIDEVVIPKIIAMRLTYPETVNKYNIDKLKMLIKNGCNKWPGANYIIKKSKKGTDPYSDISTSYNNNSNNISSIGCSNIFNVVNNYINNNCKNVRYNIKDVNNNVLLKDMCDINNMNNDINNNINNIYKNTSETNLCNVNNHNNNNNIYCNNQTQDNEEERKNSQFNKISLKYANKNHVIQNLNIGDVVERHICDGDIVLFNRQPSLHRMSIMCHKAKIMDFKTFRFNECVCSPYNADFDGDEMNLDVPQTEEARAEALYLMNVKHNLITPKNGEVIIALTQDFLSASYIITNKDTFLDRDTFCLLCSYFSDASLYIELPIPAILKPKELWTGKQLISVLIKPNKKENTIINFEIQEREYSNKFGDLKHLCLNDSYVCFYKSELICGSLGKKVLGSSKYGLFYYLIHHNSSHIALKIMNRLSKLTSRYFSNKGMTIGIDDVRPSQTLTEKKKDLLLKGYEKVNNEIILYNEKKMQIQPGCTLEETLEIKVKSILDDLRNDAGKTCNQYLHYLNKPLIMFNSGAKGALINIAQMIACVGQQNVAGQRIQNGFINRTLPHFHFHCKDSESRGFVQNSFYTGLSPTEFFFHTMSGREGLVDTAVKTAETGYMQRRLMKALEDLSIHYDYSVRSCDKQIVQFIYGDDALNPSYIDNNNTYLDQFDKVFDHIVSISSSHLLLSYKNKIPYLPHVQHQNKTSNMNNIYNNMNNINNNDSNRSIIYNNDSNMNNINNNDSNMNSIHNNNSNMNNIHNNDSNRSIIHNNDSNMNSIHNNDSNMNSIHNNNSNMNNIHNNDSNRSIIHNNDSNMNSIHNNDSNNNNNYKDCTHNPYICNESLIIRNIMNRLIYQNIAQEDLFIPLEHDEFLVNKIMESYTDQECNYEDIIRSLDLNKNVSYIHNDQGKHLSLQMCAEEHITINNTNNDNTYVEQIEMKELSKNKTKEKQSFKGTIRDMHEDSEEQMNKFITKKAKFFIEKKKGKMHECNDDIEYNNTQYDNIQYNNISCNYIKSQNLENTHHQVNNDLSFIKNNVILPPKEYHSIFHFVNDYRNVVEIKNLMDKKKIFLNNSEKNVVQSKYNRMSKNLKKKIEIINNIYRNEKKKLNRWKTKMDNDDNYWSSDDDSIIAKKIIKIKNKEKRKYHPKEEKENFDRNNYKMITDNNNNDNNNNNNDNNNNDNNNNNNNSNNNNYYYNLHDDVNNLGVTNYNTNIYPNDCNGIYEKETNNNELTTNSNMCDKNNDFSDEFFNNINENDLLYDNKYYRQIFKNVIGFVSVFEYVESYKQHYILFPYEIIKWTSFLLEYLTEIIPTNIFLHTKLSKKEKPTHQKNTGKMKIYIEEIKKWLFIKAINIYKYFSFKKSIELIKKKDYFNYIIKNYDISHRYIIHDYSFINLKQLYLFIFFNIYKYFKYISTPGDAVGSISAQSIGEPGTQMTLKTFHFAGVASMNVTLGVPRIKEIINASNSIQTPILNIPLEVNDNYNFALMMKSKLEKTTIRDICMYIKEDYTSRGVFLSVKFNEELIQKLFLNINAYNIKDIILKQSHINKIKINKIHINVINKYKLHISLKNDEFIFFQMESLKKGLLDLLIYGDKDIKRCIIKKEDIEVTDNEDEICDDMDEYYNVSQGTELYERKCNSKEENKNAIRVKKEEIDDNLEKEENIIYVSEKDSVNQLKSEKKKDINDDNNNNDDNNNNNDDDNKINDTIFNDDIDSDRNNLKENGSKLENVGEHIIERLSYKMKEKNVKKEHIKKEPNLINLDTINLDTLNFDEINVHNINNEKIEFYDEHLNICQGNKKHIQKKKKKKTVYSILVEGNSLNYVLGLEGVDFKHIISNHVINVFQVLGIEAARITIINEIKKCVEAYSIDIDIRHIMLLADIMAFTGDILGINRFGIQKARQSTLMLASFEETNEHLFVSSFFKNVDEINNISESIIVGKNIPIGTGAFQLLYDYKLEKETKNLTLLEKAERETAMNY.

Residues C88, C91, C98, H101, C128, C131, and C175 each contribute to the Zn(2+) site. D611, D613, and D615 together coordinate Mg(2+). Residues 955 to 967 are bridging helix; sequence PTEFFFHTMSGRE. Disordered regions lie at residues 1503 to 1557 and 2038 to 2079; these read EKRK…NNYY and LKSE…DSDR. Residues 1509-1520 show a composition bias toward basic and acidic residues; that stretch reads PKEEKENFDRNN. Over residues 1521-1557 the composition is skewed to low complexity; that stretch reads YKMITDNNNNDNNNNNNDNNNNDNNNNNNNSNNNNYY. Over residues 2038-2047 the composition is skewed to basic and acidic residues; it reads LKSEKKKDIN. Residues 2049-2059 are compositionally biased toward low complexity; that stretch reads DNNNNDDNNNN.

Belongs to the RNA polymerase beta' chain family. In terms of assembly, component of the RNA polymerase III (Pol III) complex consisting of 17 subunits.

The protein localises to the nucleus. The enzyme catalyses RNA(n) + a ribonucleoside 5'-triphosphate = RNA(n+1) + diphosphate. DNA-dependent RNA polymerase catalyzes the transcription of DNA into RNA using the four ribonucleoside triphosphates as substrates. Largest and catalytic core component of RNA polymerase III which synthesizes small RNAs, such as 5S rRNA and tRNAs. Forms the polymerase active center together with the second largest subunit. A single-stranded DNA template strand of the promoter is positioned within the central active site cleft of Pol III. A bridging helix emanates from RPC1 and crosses the cleft near the catalytic site and is thought to promote translocation of Pol III by acting as a ratchet that moves the RNA-DNA hybrid through the active site by switching from straight to bent conformations at each step of nucleotide addition. This Plasmodium falciparum protein is DNA-directed RNA polymerase III subunit RPC1.